The chain runs to 35 residues: Kappa-theraphotoxin-Gr1b (35 aa).

3 disulfide bridges follow: cysteine 2-cysteine 16, cysteine 9-cysteine 21, and cysteine 15-cysteine 28. An involved in active face region spans residues 4–6; it reads YLF.

Belongs to the neurotoxin 10 (Hwtx-1) family. 09 (HaTx) subfamily. Expressed by the venom gland.

The protein resides in the secreted. Its function is as follows. Inhibitor of voltage-gated potassium channels. Inhibits Kv2.1/KCNB1 channels, by shifting activation of the channel to more depolarized voltages. The toxin binding sites may be situated on the S3-S4 extracellular linker of the channel. One, two, three or four toxin molecules may bind the Kv2.1/KCNB1 channel. May need to partition into the membrane in order to bind to the channel. Antibacterial activity is not observed. The protein is Kappa-theraphotoxin-Gr1b of Grammostola rosea (Chilean rose tarantula).